The sequence spans 96 residues: Co-chaperonin GroES (96 aa).

Belongs to the GroES chaperonin family. In terms of assembly, heptamer of 7 subunits arranged in a ring. Interacts with the chaperonin GroEL.

It localises to the cytoplasm. Functionally, together with the chaperonin GroEL, plays an essential role in assisting protein folding. The GroEL-GroES system forms a nano-cage that allows encapsulation of the non-native substrate proteins and provides a physical environment optimized to promote and accelerate protein folding. GroES binds to the apical surface of the GroEL ring, thereby capping the opening of the GroEL channel. The polypeptide is Co-chaperonin GroES (Hydrogenovibrio crunogenus (strain DSM 25203 / XCL-2) (Thiomicrospira crunogena)).